The primary structure comprises 1506 residues: Transcriptional repressor NF-X1 homolog (1506 aa).

Positions 1–12 (MEESQNIPPKTQ) are enriched in polar residues. 3 disordered regions span residues 1–123 (MEES…NNQL), 142–164 (LKSE…QEPT), and 181–282 (KAFV…KKDI). Composition is skewed to low complexity over residues 13–103 (TLNN…SNSN) and 110–121 (HNNNYNNNNNNN). Residues 194–209 (NNTNNNNNNNNNNNNN) show a composition bias toward low complexity. A compositionally biased stretch (basic and acidic residues) spans 217–232 (DNNRPQRERRERKPKE). The segment covering 240-252 (PQQPQQPQQPQPQ) has biased composition (pro residues). Residues 253 to 263 (PQQQQQSQQQQ) are compositionally biased toward low complexity. Over residues 267–282 (ENNRKKENKLQSKKDI) the composition is skewed to basic and acidic residues. The segment at 363–416 (IYECMVCFENVGKNAVIWSCSQCFTMFHSSCIKQWSSKSVTTEGKWKCPGCRYN) adopts a PHD-type zinc-finger fold. The segment at 366-414 (CMVCFENVGKNAVIWSCSQCFTMFHSSCIKQWSSKSVTTEGKWKCPGCR) adopts an RING-type; degenerate zinc-finger fold. NF-X1-type zinc fingers lie at residues 460 to 478 (CPHS…NCSS), 515 to 534 (CGNH…PCEV), 581 to 600 (CGNH…PCSL), 642 to 661 (CKQH…SCKV), 739 to 758 (CGVH…NCYI), 796 to 817 (CGHS…PCTY), and 852 to 868 (CLSH…PCLI). 2 disordered regions span residues 897-1012 (QQSK…VDLN) and 1021-1040 (NEEE…DEDE). The segment covering 903–921 (TTTTTTTTTTSTTSTTSPK) has biased composition (low complexity). Residues 925–934 (KDEELIEDDN) are compositionally biased toward acidic residues. The span at 935-980 (NNNNNNNNNNNNNNNNNNNNNNNNNNNNNNNNNNNNNNNNNNNNNN) shows a compositional bias: low complexity. Composition is skewed to basic and acidic residues over residues 981–1002 (EKAE…HSDD) and 1021–1031 (NEEEERIKKEE). The NF-X1-type 8 zinc-finger motif lies at 1062–1084 (CEHTCHQACHPGEPCPTNISCKQ). Disordered stretches follow at residues 1132-1167 (SHTL…SSPT) and 1447-1473 (NQNQ…IKPT). Low complexity-rich tracts occupy residues 1137 to 1167 (NNPN…SSPT) and 1447 to 1470 (NQNQ…NINI).

It belongs to the NFX1 family.

The protein localises to the nucleus. May play a role in transcription regulation. This is Transcriptional repressor NF-X1 homolog (nfx1) from Dictyostelium discoideum (Social amoeba).